Here is a 546-residue protein sequence, read N- to C-terminus: NAD(P)H-quinone oxidoreductase chain 4 (546 aa).

14 consecutive transmembrane segments (helical) span residues 17-37 (VPWL…VPFI), 48-68 (WYAL…YLNG), 103-123 (LILL…PVSF), 127-147 (LFYF…AVQD), 149-169 (LLFF…LAIW), 181-201 (FILY…AMGF), 222-242 (GFQL…LPIV), 256-276 (TAPV…YALL), 290-310 (FAPL…LTSF), 327-347 (MGFV…GAML), 348-368 (QMIS…ATYD), 389-409 (FALW…SGFV), 430-450 (VVIC…LLSM), and 477-497 (VYII…PRLM).

Belongs to the complex I subunit 4 family.

The protein localises to the cellular thylakoid membrane. The enzyme catalyses a plastoquinone + NADH + (n+1) H(+)(in) = a plastoquinol + NAD(+) + n H(+)(out). It catalyses the reaction a plastoquinone + NADPH + (n+1) H(+)(in) = a plastoquinol + NADP(+) + n H(+)(out). Functionally, NDH-1 shuttles electrons from NAD(P)H, via FMN and iron-sulfur (Fe-S) centers, to quinones in the respiratory chain. The immediate electron acceptor for the enzyme in this species is believed to be plastoquinone. Couples the redox reaction to proton translocation (for every two electrons transferred, four hydrogen ions are translocated across the cytoplasmic membrane), and thus conserves the redox energy in a proton gradient. The sequence is that of NAD(P)H-quinone oxidoreductase chain 4 from Parasynechococcus marenigrum (strain WH8102).